Consider the following 574-residue polypeptide: Membrane protein insertase YidC (574 aa).

Transmembrane regions (helical) follow at residues 6–26, 350–370, 376–396, 447–467, 491–511, and 525–545; these read VFLI…WGKE, VIDY…FWVL, FLHN…LVLY, GGCL…WVLV, FILP…TPTP, and PLVF…YWVV.

It belongs to the OXA1/ALB3/YidC family. Type 1 subfamily. In terms of assembly, interacts with the Sec translocase complex via SecD. Specifically interacts with transmembrane segments of nascent integral membrane proteins during membrane integration.

Its subcellular location is the cell inner membrane. Its function is as follows. Required for the insertion and/or proper folding and/or complex formation of integral membrane proteins into the membrane. Involved in integration of membrane proteins that insert both dependently and independently of the Sec translocase complex, as well as at least some lipoproteins. Aids folding of multispanning membrane proteins. The polypeptide is Membrane protein insertase YidC (Xanthomonas oryzae pv. oryzae (strain KACC10331 / KXO85)).